The sequence spans 451 residues: Phosphoglucosamine mutase (451 aa).

Serine 102 functions as the Phosphoserine intermediate in the catalytic mechanism. Mg(2+) contacts are provided by serine 102, aspartate 243, aspartate 245, and aspartate 247. At serine 102 the chain carries Phosphoserine.

It belongs to the phosphohexose mutase family. It depends on Mg(2+) as a cofactor. In terms of processing, activated by phosphorylation.

It catalyses the reaction alpha-D-glucosamine 1-phosphate = D-glucosamine 6-phosphate. Functionally, catalyzes the conversion of glucosamine-6-phosphate to glucosamine-1-phosphate. The chain is Phosphoglucosamine mutase from Paramagnetospirillum magneticum (strain ATCC 700264 / AMB-1) (Magnetospirillum magneticum).